The chain runs to 395 residues: S-adenosylmethionine synthase (395 aa).

Position 14 (His-14) interacts with ATP. Asp-16 lines the Mg(2+) pocket. A K(+)-binding site is contributed by Glu-42. Positions 55 and 98 each coordinate L-methionine. The interval 98–108 (QSPDIAMGVDK) is flexible loop. Residues 175 to 177 (DGK), 242 to 243 (RF), Asp-251, 257 to 258 (RK), Ala-274, and Lys-278 each bind ATP. L-methionine is bound at residue Asp-251. L-methionine is bound at residue Lys-282.

It belongs to the AdoMet synthase family. In terms of assembly, homotetramer; dimer of dimers. The cofactor is Mg(2+). K(+) serves as cofactor.

The protein localises to the cytoplasm. It catalyses the reaction L-methionine + ATP + H2O = S-adenosyl-L-methionine + phosphate + diphosphate. It functions in the pathway amino-acid biosynthesis; S-adenosyl-L-methionine biosynthesis; S-adenosyl-L-methionine from L-methionine: step 1/1. In terms of biological role, catalyzes the formation of S-adenosylmethionine (AdoMet) from methionine and ATP. The overall synthetic reaction is composed of two sequential steps, AdoMet formation and the subsequent tripolyphosphate hydrolysis which occurs prior to release of AdoMet from the enzyme. The protein is S-adenosylmethionine synthase of Thermosipho melanesiensis (strain DSM 12029 / CIP 104789 / BI429).